Here is a 795-residue protein sequence, read N- to C-terminus: Toll-like receptor 6 (795 aa).

An N-terminal signal peptide occupies residues 1 to 27 (MSQDRKPIVGSFHFVCALALIVGSMTP). At 28-584 (FSNELESMVD…FHMSPLSCDT (557 aa)) the chain is on the extracellular side. N42 is a glycosylation site (N-linked (GlcNAc...) asparagine). LRR repeat units follow at residues 54–77 (TKAL…FLSE), 78–101 (LRVL…FNQD), 102–125 (LEYL…SLRH), 126–150 (LDLS…KLTF), 151–175 (LGLS…SCIL), 176–199 (LDLV…TTVL), 200–223 (HLVF…LGHL), 224–250 (QLSN…RGPT), 251–278 (LLNV…PRPV), 279–308 (EYLN…KSLM), 309–337 (IEHV…KMLS), 338–361 (ISDT…LNFT), 362–388 (QNVF…QRNG), 389–414 (LKNF…SLNS), 415–437 (LNSH…NLSS), 438–457 (NMLT…VLDL), 458–478 (HNNR…LQEL), 479–500 (NVAS…LSVL), and 501–524 (VIDH…IRSL). N114 carries an N-linked (GlcNAc...) asparagine glycan. C117 and C139 are oxidised to a cystine. N144 carries an N-linked (GlcNAc...) asparagine glycan. Residues N195 and N214 are each glycosylated (N-linked (GlcNAc...) asparagine). Cysteines 235 and 265 form a disulfide. Residues N253 and N285 are each glycosylated (N-linked (GlcNAc...) asparagine). Cysteines 348 and 373 form a disulfide. N-linked (GlcNAc...) asparagine glycosylation occurs at N359. N-linked (GlcNAc...) asparagine glycosylation is found at N401 and N434. C424 and C447 form a disulfide bridge. Residues 525 to 576 (TAGNNPFQCTCELRDFVKNIGWVAREVVEGWPDSYRCDYPESSKGTALRDFH) enclose the LRRCT domain. The helical transmembrane segment at 585 to 605 (VLLTVTIGATMLVLAVTGAFL) threads the bilayer. Residues 606–795 (CLYFDLPWYV…ALVNEDDVKT (190 aa)) are Cytoplasmic-facing. A TIR domain is found at 640–781 (LQFHAFVSYS…LFWANLRASF (142 aa)).

Belongs to the Toll-like receptor family. As to quaternary structure, homodimer (via cytoplasmic TIR domain). Heterodimer with TLR2 via their respective extracellular domains. Binds MYD88 via their respective TIR domains. Interacts with CD36, following CD36 stimulation by oxLDL or amyloid-beta 42, and forms a heterodimer with TLR4. The trimeric complex is internalized and triggers inflammatory response. LYN kinase activity facilitates TLR4:TLR6 heterodimerization and signal initiation. The heterodimer TLR2:TLR6 interacts with CD14 and CD36 in response to triacylated lipopeptides. In terms of tissue distribution, detected in thymus, spleen, ovary and lung. Expressed in macrohpages.

Its subcellular location is the cell membrane. It is found in the cytoplasmic vesicle. It localises to the phagosome membrane. The protein resides in the membrane raft. The protein localises to the golgi apparatus. Functionally, participates in the innate immune response to Gram-positive bacteria and fungi. Specifically recognizes diacylated and, to a lesser extent, triacylated lipopeptides. In response to diacylated lipopeptides, forms the activation cluster TLR2:TLR6:CD14:CD36, this cluster triggers signaling from the cell surface and subsequently is targeted to the Golgi in a lipid-raft dependent pathway. Acts via MYD88 and TRAF6, leading to NF-kappa-B activation, cytokine secretion and the inflammatory response. Recognizes mycoplasmal macrophage-activating lipopeptide-2kD (MALP-2), soluble tuberculosis factor (STF), phenol-soluble modulin (PSM) and B.burgdorferi outer surface protein A lipoprotein (OspA-L) cooperatively with TLR2. In complex with TLR4, promotes sterile inflammation in monocytes/macrophages in response to oxidized low-density lipoprotein (oxLDL) or amyloid-beta 42. In this context, the initial signal is provided by oxLDL- or amyloid-beta 42-binding to CD36. This event induces the formation of a heterodimer of TLR4 and TLR6, which is rapidly internalized and triggers inflammatory response, leading to the NF-kappa-B-dependent production of CXCL1, CXCL2 and CCL9 cytokines, via MYD88 signaling pathway, and CCL5 cytokine, via TICAM1 signaling pathway, as well as IL1B secretion. The chain is Toll-like receptor 6 (Tlr6) from Mus musculus (Mouse).